The chain runs to 399 residues: 3-phosphoshikimate 1-carboxyvinyltransferase (399 aa).

3 residues coordinate 3-phosphoshikimate: lysine 19, serine 20, and arginine 24. Phosphoenolpyruvate is bound at residue lysine 19. Phosphoenolpyruvate is bound by residues glycine 83 and arginine 111. 6 residues coordinate 3-phosphoshikimate: serine 152, serine 153, glutamine 154, aspartate 288, glutamine 310, and lysine 314. Glutamine 154 lines the phosphoenolpyruvate pocket. Aspartate 288 functions as the Proton acceptor in the catalytic mechanism. 3 residues coordinate phosphoenolpyruvate: arginine 318, arginine 359, and lysine 385.

It belongs to the EPSP synthase family. As to quaternary structure, monomer.

It is found in the cytoplasm. The catalysed reaction is 3-phosphoshikimate + phosphoenolpyruvate = 5-O-(1-carboxyvinyl)-3-phosphoshikimate + phosphate. It functions in the pathway metabolic intermediate biosynthesis; chorismate biosynthesis. Catalyzes the transfer of the enolpyruvyl moiety of phosphoenolpyruvate (PEP) to the 5-hydroxyl of shikimate-3-phosphate (S3P) to produce enolpyruvyl shikimate-3-phosphate and inorganic phosphate. The sequence is that of 3-phosphoshikimate 1-carboxyvinyltransferase from Thermococcus kodakarensis (strain ATCC BAA-918 / JCM 12380 / KOD1) (Pyrococcus kodakaraensis (strain KOD1)).